The primary structure comprises 45 residues: Gene 78 protein (45 aa).

Basic and acidic residues predominate over residues 1-14 (MKKMSDQLKARLEL). The interval 1 to 45 (MKKMSDQLKARLELRLSNAAQPHRNRKREMKRPGKGNRNNWKKEY) is disordered. Residues 23–35 (HRNRKREMKRPGK) show a composition bias toward basic residues.

This is Gene 78 protein (78) from Mycobacterium phage L5 (Mycobacteriophage L5).